Reading from the N-terminus, the 301-residue chain is Ribonuclease H2 subunit A (301 aa).

Residue methionine 1 is modified to N-acetylmethionine. Positions 28 to 251 (PCVLGVDEAG…AQAILEKEAE (224 aa)) constitute an RNase H type-2 domain. A divalent metal cation-binding residues include aspartate 34, glutamate 35, and aspartate 142. The residue at position 217 (threonine 217) is a Phosphothreonine. The segment covering 255 to 264 (WEDSEAEEDP) has biased composition (acidic residues). The disordered stretch occupies residues 255–284 (WEDSEAEEDPERPGKITSYFSQGPQTCRPQ). Serine 258 bears the Phosphoserine mark. Polar residues predominate over residues 272-282 (SYFSQGPQTCR).

It belongs to the RNase HII family. Eukaryotic subfamily. In terms of assembly, the RNase H2 complex is a heterotrimer composed of the catalytic subunit RNASEH2A and the non-catalytic subunits RNASEH2B and RNASEH2C. Requires Mn(2+) as cofactor. Mg(2+) serves as cofactor.

It localises to the nucleus. It catalyses the reaction Endonucleolytic cleavage to 5'-phosphomonoester.. Catalytic subunit of RNase HII, an endonuclease that specifically degrades the RNA of RNA:DNA hybrids. Participates in DNA replication, possibly by mediating the removal of lagging-strand Okazaki fragment RNA primers during DNA replication. Mediates the excision of single ribonucleotides from DNA:RNA duplexes. This chain is Ribonuclease H2 subunit A (Rnaseh2a), found in Mus musculus (Mouse).